The chain runs to 367 residues: Probable protein phosphatase 2C 67 (367 aa).

Residues 1–79 are disordered; that stretch reads MAHQKREATS…DEKAATNSNV (79 aa). Basic and acidic residues predominate over residues 31–46; it reads AEKEHILTSDASHETN. Residues 91–365 enclose the PPM-type phosphatase domain; sequence EADAAEDKGC…DNCTAVLIVF (275 aa). 4 residues coordinate Mn(2+): Asp-131, Gly-132, Asp-312, and Asp-356.

It belongs to the PP2C family. Mg(2+) is required as a cofactor. Mn(2+) serves as cofactor.

The enzyme catalyses O-phospho-L-seryl-[protein] + H2O = L-seryl-[protein] + phosphate. It carries out the reaction O-phospho-L-threonyl-[protein] + H2O = L-threonyl-[protein] + phosphate. The protein is Probable protein phosphatase 2C 67 of Oryza sativa subsp. japonica (Rice).